A 228-amino-acid polypeptide reads, in one-letter code: MTRHSRPIIAVVPAAGVGSRMQADKPKQYLTLLGKTLLEHTLEVLLSYTPIQQIILAVAENDPYLDQLDVIRQPKIKIVQGGRDRAGSVFNGLKAITQPHAWVMVHDAARPCLTHEDLDKLLQIEDDNGGILAIPAVDTIKRASAEKQIIQTEDRSQLWQAQTPQFFRADLLYRALQQAFEHGLAVTDEASAMEFAGFRPHLVAGRSDNLKVTRPEDLKLAEFYLSRK.

Belongs to the IspD/TarI cytidylyltransferase family. IspD subfamily.

It carries out the reaction 2-C-methyl-D-erythritol 4-phosphate + CTP + H(+) = 4-CDP-2-C-methyl-D-erythritol + diphosphate. It participates in isoprenoid biosynthesis; isopentenyl diphosphate biosynthesis via DXP pathway; isopentenyl diphosphate from 1-deoxy-D-xylulose 5-phosphate: step 2/6. Functionally, catalyzes the formation of 4-diphosphocytidyl-2-C-methyl-D-erythritol from CTP and 2-C-methyl-D-erythritol 4-phosphate (MEP). The sequence is that of 2-C-methyl-D-erythritol 4-phosphate cytidylyltransferase from Mannheimia succiniciproducens (strain KCTC 0769BP / MBEL55E).